The chain runs to 734 residues: Oligopeptide transporter 2 (734 aa).

The next 14 membrane-spanning stretches (helical) occupy residues 44–64 (MWFLGLLSCILLSFLNTFFGY), 68–88 (PLMITMISVQVVTLPLGKLMA), 125–145 (GAGFGSGTAYAVGIVDIIMAF), 152–172 (FLASWILVITTQILGYGWAGI), 211–231 (FFVIAFVCSFAWYIFPAYLFL), 252–272 (LGSGMSGLGIGAFALDWSVIA), 283–303 (FFAIVNVLVGYVLVMYMVIPI), 359–379 (FFAISYGIGFAAIVSTLTHVA), 414–434 (WWFYSLLAISLVLSLVLCIFM), 442–462 (WWGLLLASFMALTFTVPVSII), 525–545 (MFLVQFIGTVIAGTVNISVAW), 596–616 (YPALNWFFLGGLIGPVLVWLL), 644–664 (ATSVNFNCWIIVGVIFNYFVF), and 677–697 (VLSAALDAGLAFMGVLLYFSL).

This sequence belongs to the oligopeptide OPT transporter (TC 2.A.67.1) family. In terms of tissue distribution, expressed in flowers, leaves, roots, and stems.

The protein localises to the membrane. Functionally, involved in the translocation of tetra- and pentapeptides across the cellular membrane in an energy-dependent manner. The polypeptide is Oligopeptide transporter 2 (OPT2) (Arabidopsis thaliana (Mouse-ear cress)).